The primary structure comprises 219 residues: Proteasome subunit beta (219 aa).

The propeptide at 1–14 is removed in mature form; by autocatalysis; that stretch reads MISNSEYHKEYMKG. Residue T15 is the Nucleophile of the active site.

The protein belongs to the peptidase T1B family. The 20S proteasome core is composed of 14 alpha and 14 beta subunits that assemble into four stacked heptameric rings, resulting in a barrel-shaped structure. The two inner rings, each composed of seven catalytic beta subunits, are sandwiched by two outer rings, each composed of seven alpha subunits. The catalytic chamber with the active sites is on the inside of the barrel. Has a gated structure, the ends of the cylinder being occluded by the N-termini of the alpha-subunits. Is capped at one or both ends by the proteasome regulatory ATPase, PAN.

The protein localises to the cytoplasm. The enzyme catalyses Cleavage of peptide bonds with very broad specificity.. The formation of the proteasomal ATPase PAN-20S proteasome complex, via the docking of the C-termini of PAN into the intersubunit pockets in the alpha-rings, triggers opening of the gate for substrate entry. Interconversion between the open-gate and close-gate conformations leads to a dynamic regulation of the 20S proteasome proteolysis activity. Component of the proteasome core, a large protease complex with broad specificity involved in protein degradation. This chain is Proteasome subunit beta, found in Methanococcus maripaludis (strain C6 / ATCC BAA-1332).